Reading from the N-terminus, the 484-residue chain is MSDRIRVRYAPSPTGYLHIGNARTALFNYLYAKHYNGDFVIRIEDTDKKRNLEDGETSQFDNLKWLGLDWDESVDKDNGYGPYRQSERQHIYQPLIDQLLAEDKAYKCYMTEEELEAEREAQIARGEMPRYGGQHAHLTEEQRQQFEAEGRQPSIRFRVPQNQTYSFDDMVKGNISFDSNGIGDWVIVKKDGIPTYNFAVAIDDHYMQISDVIRGDDHISNTPKQIMIYEAFGWEPPRFGHMSLIVNEERKKLSKRDGQILQFIEQYRDLGYLPEALFNFIALLGWSPEGEEEIFSKEEFIKIFDEKRLSKSPAFFDKQKLAWVNNQYMKQKDTETVFQLALPHLIKANLIPEVPSEEDLSWGRKLIALYQKEMSYAGEIVPLSEMFFKEMPALGEEEQQVINGKQVPELMTHLFSKLEALEPFESAEIKKTIKEVQKETGIKGKQLFMPIRVAVTGQMHGPELPNTIEVLGKEKVLNRLKQYK.

Residues 11 to 21 carry the 'HIGH' region motif; the sequence is PSPTGYLHIGN. Residues 252–256 carry the 'KMSKS' region motif; it reads KLSKR. Lysine 255 serves as a coordination point for ATP.

Belongs to the class-I aminoacyl-tRNA synthetase family. Glutamate--tRNA ligase type 1 subfamily. Monomer.

The protein localises to the cytoplasm. It carries out the reaction tRNA(Glu) + L-glutamate + ATP = L-glutamyl-tRNA(Glu) + AMP + diphosphate. Its function is as follows. Catalyzes the attachment of glutamate to tRNA(Glu) in a two-step reaction: glutamate is first activated by ATP to form Glu-AMP and then transferred to the acceptor end of tRNA(Glu). The protein is Glutamate--tRNA ligase of Staphylococcus aureus (strain COL).